The primary structure comprises 314 residues: CBASS oligonucleotide cyclase CdnC (314 aa).

K60 provides a ligand contact to ATP. Mg(2+)-binding residues include D73 and D75. Residues D75, K186, 197-199, and N263 each bind ATP; that span reads KSF.

Belongs to the CD-NTase family. C01 subfamily. As to quaternary structure, forms complexes with Cap7 with 1:1 and 2:2 stoichimetry, and a 1:1:6 CdnC:Cap7:Cap6 complex. Requires Mg(2+) as cofactor.

Functionally, cyclic nucleotide synthase (second messenger synthase) of a CBASS antivirus system. CBASS (cyclic oligonucleotide-based antiphage signaling system) provides immunity against bacteriophage. The CD-NTase protein synthesizes cyclic nucleotides in response to infection; these serve as specific second messenger signals. The signals activate a diverse range of effectors, leading to bacterial cell death and thus abortive phage infection. A type III CBASS system. Expression of this CBASS system (Cap18-Cap6-Cap7-CdnC-CapW-Cap17) in a susceptible E.coli (strain MG1655) confers resistance to bacteriophage P1. Probable cyclic nucleotide synthase that upon activation catalyzes the synthesis of a cyclic nucleotide. A cyclase activity for this enzyme was not identified in. The polypeptide is CBASS oligonucleotide cyclase CdnC (Escherichia coli (strain KTE188)).